The sequence spans 279 residues: Phosphatidylglycerol--prolipoprotein diacylglyceryl transferase (279 aa).

A run of 7 helical transmembrane segments spans residues 14 to 34, 62 to 82, 106 to 126, 136 to 156, 190 to 210, 218 to 238, and 252 to 272; these read IAFS…ACAI, YFLW…ILIY, FVGI…IASY, LLIY…FGRI, PSQL…VMWA, GLLI…AEFY, and LSMG…ILLY. Arginine 155 serves as a coordination point for a 1,2-diacyl-sn-glycero-3-phospho-(1'-sn-glycerol).

It belongs to the Lgt family.

The protein localises to the cell inner membrane. The catalysed reaction is L-cysteinyl-[prolipoprotein] + a 1,2-diacyl-sn-glycero-3-phospho-(1'-sn-glycerol) = an S-1,2-diacyl-sn-glyceryl-L-cysteinyl-[prolipoprotein] + sn-glycerol 1-phosphate + H(+). Its pathway is protein modification; lipoprotein biosynthesis (diacylglyceryl transfer). Its function is as follows. Catalyzes the transfer of the diacylglyceryl group from phosphatidylglycerol to the sulfhydryl group of the N-terminal cysteine of a prolipoprotein, the first step in the formation of mature lipoproteins. This Helicobacter pylori (strain HPAG1) protein is Phosphatidylglycerol--prolipoprotein diacylglyceryl transferase.